Here is a 60-residue protein sequence, read N- to C-terminus: DNA-binding protein 7c (60 aa).

Positions 37 to 60 are disordered; sequence DNGKTGRGAVSEKDAPKELLEKLK. Over residues 46-60 the composition is skewed to basic and acidic residues; that stretch reads VSEKDAPKELLEKLK.

Belongs to the 7 kDa DNA-binding/endoribonuclease P2 family. As to quaternary structure, monomer.

Its subcellular location is the cytoplasm. In terms of biological role, can constrain negative DNA supercoils. May be involved in maintaining the integrity of the genome at high temperature. The chain is DNA-binding protein 7c from Acidianus hospitalis (strain W1).